A 288-amino-acid chain; its full sequence is Putative branched-chain-amino-acid aminotransferase (288 aa).

Lysine 146 is modified (N6-(pyridoxal phosphate)lysine).

Belongs to the class-IV pyridoxal-phosphate-dependent aminotransferase family. It depends on pyridoxal 5'-phosphate as a cofactor.

It catalyses the reaction L-leucine + 2-oxoglutarate = 4-methyl-2-oxopentanoate + L-glutamate. The enzyme catalyses L-isoleucine + 2-oxoglutarate = (S)-3-methyl-2-oxopentanoate + L-glutamate. The catalysed reaction is L-valine + 2-oxoglutarate = 3-methyl-2-oxobutanoate + L-glutamate. The protein operates within amino-acid biosynthesis; L-isoleucine biosynthesis; L-isoleucine from 2-oxobutanoate: step 4/4. It functions in the pathway amino-acid biosynthesis; L-leucine biosynthesis; L-leucine from 3-methyl-2-oxobutanoate: step 4/4. Its pathway is amino-acid biosynthesis; L-valine biosynthesis; L-valine from pyruvate: step 4/4. Its function is as follows. Acts on leucine, isoleucine and valine. In Methanocaldococcus jannaschii (strain ATCC 43067 / DSM 2661 / JAL-1 / JCM 10045 / NBRC 100440) (Methanococcus jannaschii), this protein is Putative branched-chain-amino-acid aminotransferase (ilvE).